The chain runs to 880 residues: Leucine--tRNA ligase (880 aa).

The 'HIGH' region signature appears at 46 to 56 (PYPSGALHMGH). Positions 638–642 (KMSKS) match the 'KMSKS' region motif. Lysine 641 contributes to the ATP binding site.

Belongs to the class-I aminoacyl-tRNA synthetase family.

The protein resides in the cytoplasm. It catalyses the reaction tRNA(Leu) + L-leucine + ATP = L-leucyl-tRNA(Leu) + AMP + diphosphate. This chain is Leucine--tRNA ligase, found in Xanthomonas oryzae pv. oryzae (strain KACC10331 / KXO85).